The chain runs to 1218 residues: Probable RNA-dependent RNA polymerase SHL2 (1218 aa).

The protein belongs to the RdRP family.

The enzyme catalyses RNA(n) + a ribonucleoside 5'-triphosphate = RNA(n+1) + diphosphate. Involved in the RNA silencing pathway. Probably required for the generation of small interfering RNAs (siRNAs). Regulates shoot apical meristem (SAM) initiation and maintenance and leaf polarization through the trans-acting siRNAS (ta-siRNAs) pathway which probably modulates the expression of the ARF2, ARF3, ARF4, ARF14 and ARF15 genes. The sequence is that of Probable RNA-dependent RNA polymerase SHL2 (SHL2) from Oryza sativa subsp. japonica (Rice).